The following is a 311-amino-acid chain: GTP cyclohydrolase MptA (311 aa).

The protein belongs to the GTP cyclohydrolase IV family. As to quaternary structure, homodimer. Fe(2+) serves as cofactor.

The catalysed reaction is GTP + H2O = 7,8-dihydroneopterin 2',3'-cyclic phosphate + formate + diphosphate + H(+). The protein operates within cofactor biosynthesis; 5,6,7,8-tetrahydromethanopterin biosynthesis. Functionally, converts GTP to 7,8-dihydro-D-neopterin 2',3'-cyclic phosphate, the first intermediate in the biosynthesis of coenzyme methanopterin. This chain is GTP cyclohydrolase MptA, found in Halobacterium salinarum (strain ATCC 29341 / DSM 671 / R1).